The following is a 162-amino-acid chain: Peptide deformylase (162 aa).

Fe cation is bound by residues cysteine 86 and histidine 128. The active site involves glutamate 129. Histidine 132 lines the Fe cation pocket.

Belongs to the polypeptide deformylase family. Fe(2+) serves as cofactor.

The enzyme catalyses N-terminal N-formyl-L-methionyl-[peptide] + H2O = N-terminal L-methionyl-[peptide] + formate. Its function is as follows. Removes the formyl group from the N-terminal Met of newly synthesized proteins. Requires at least a dipeptide for an efficient rate of reaction. N-terminal L-methionine is a prerequisite for activity but the enzyme has broad specificity at other positions. The protein is Peptide deformylase of Treponema pallidum (strain Nichols).